We begin with the raw amino-acid sequence, 375 residues long: Succinyl-diaminopimelate desuccinylase (375 aa).

His66 contributes to the Zn(2+) binding site. The active site involves Asp68. Asp99 contacts Zn(2+). Glu133 serves as the catalytic Proton acceptor. Glu134, Glu162, and His348 together coordinate Zn(2+).

The protein belongs to the peptidase M20A family. DapE subfamily. In terms of assembly, homodimer. Requires Zn(2+) as cofactor. It depends on Co(2+) as a cofactor.

The enzyme catalyses N-succinyl-(2S,6S)-2,6-diaminopimelate + H2O = (2S,6S)-2,6-diaminopimelate + succinate. It functions in the pathway amino-acid biosynthesis; L-lysine biosynthesis via DAP pathway; LL-2,6-diaminopimelate from (S)-tetrahydrodipicolinate (succinylase route): step 3/3. Functionally, catalyzes the hydrolysis of N-succinyl-L,L-diaminopimelic acid (SDAP), forming succinate and LL-2,6-diaminopimelate (DAP), an intermediate involved in the bacterial biosynthesis of lysine and meso-diaminopimelic acid, an essential component of bacterial cell walls. This Serratia proteamaculans (strain 568) protein is Succinyl-diaminopimelate desuccinylase.